The sequence spans 338 residues: MDYTRAGARLQVLLGHLGRPSALQIVAHPVSGPASPANFCPEQFQYTLDNNVLSLEQRKFYEENGFLVIKNLVSDDDIQRFRAEFERICRKEVKPPGMTVMKDVAIAKQGYAPSERVVTKIQDFQQNEELFRYCALPQIVKYVECFTGPNIMAMHTMLINKPPDSGKKTSRHPLHQDLHFFPFRPSNLIVCAWTAMEHIDRNNGCLVVLPGTHKGPLKPHDYPKWEGGVNKMYHGIQDYDPDSPRVHLVMEKGDTVFFHPLLIHGSGRNRTQGFRKAISCHYGSSDCKYISVKGTSQENIAREVIEIAEKRYGVQGALDFEDTWKFRCRLVKGERINL.

The N-terminal 30 residues, 1-30 (MDYTRAGARLQVLLGHLGRPSALQIVAHPV), are a transit peptide targeting the peroxisome. An N6-succinyllysine mark is found at Lys59 and Lys108. 2-oxoglutarate-binding positions include Lys120, Met157, 175–177 (HQD), and Trp193. Fe cation-binding residues include His175 and Asp177. N6-succinyllysine is present on residues Lys231 and Lys252. Residue His264 coordinates Fe cation. The 2-oxoglutarate site is built by Ser266 and Arg275.

Belongs to the PhyH family. In terms of assembly, interacts specifically with FKBP52 and PHYHIP. It depends on Fe cation as a cofactor. L-ascorbate serves as cofactor. Requires ATP as cofactor. Mg(2+) is required as a cofactor.

It localises to the peroxisome. The catalysed reaction is phytanoyl-CoA + 2-oxoglutarate + O2 = 2-hydroxyphytanoyl-CoA + succinate + CO2. It carries out the reaction 3-methylhexadecanoyl-CoA + 2-oxoglutarate + O2 = 2-hydroxy-3-methylhexadecanoyl-CoA + succinate + CO2. It catalyses the reaction hexadecanoyl-CoA + 2-oxoglutarate + O2 = 2-hydroxyhexadecanoyl-CoA + succinate + CO2. The enzyme catalyses octanoyl-CoA + 2-oxoglutarate + O2 = 2-hydroxyoctanoyl-CoA + succinate + CO2. The catalysed reaction is decanoyl-CoA + 2-oxoglutarate + O2 = 2-hydroxydecanoyl-CoA + succinate + CO2. It carries out the reaction 3-methylbutanoyl-CoA + 2-oxoglutarate + O2 = 2-hydroxy-3-methylbutanoyl-CoA + succinate + CO2. It catalyses the reaction heptadecanoyl-CoA + 2-oxoglutarate + O2 = 2-hydroxyheptadecanoyl-CoA + succinate + CO2. The enzyme catalyses eicosanoyl-CoA + 2-oxoglutarate + O2 = 2-hydroxyeicosanoyl-CoA + succinate + CO2. The catalysed reaction is octadecanoyl-CoA + 2-oxoglutarate + O2 = 2-hydroxyoctadecanoyl-CoA + succinate + CO2. It carries out the reaction dodecanoyl-CoA + 2-oxoglutarate + O2 = 2-hydroxydodecanoyl-CoA + succinate + CO2. It catalyses the reaction tetradecanoyl-CoA + 2-oxoglutarate + O2 = 2-hydroxytetradecanoyl-CoA + succinate + CO2. The enzyme catalyses hexanoyl-CoA + 2-oxoglutarate + O2 = 2-hydroxyhexanoyl-CoA + succinate + CO2. The catalysed reaction is butanoyl-CoA + 2-oxoglutarate + O2 = 2-hydroxybutanoyl-CoA + succinate + CO2. It carries out the reaction 3-methylnonanoyl-CoA + 2-oxoglutarate + O2 = 2-hydroxy-3-methylnonanoyl-CoA + succinate + CO2. It catalyses the reaction 3-methylundecanoyl-CoA + 2-oxoglutarate + O2 = 2-hydroxy-3-methylundecanoyl-CoA + succinate + CO2. The enzyme catalyses 3-methyldodecanoyl-CoA + 2-oxoglutarate + O2 = 2-hydroxy-3-methyldodecanoyl-CoA + succinate + CO2. The protein operates within lipid metabolism; fatty acid metabolism. In terms of biological role, catalyzes the 2-hydroxylation of racemic phytanoyl-CoA and the isomers of 3-methylhexadecanoyl-CoA. Shows activity also towards a variety of other mono-branched 3-methylacyl-CoA esters (with a chain length of at least seven carbon atoms) and straight-chain acyl-CoA esters (with a chain length longer than four carbon atoms). Does not hydroxylate long and very long straight chain acyl-CoAs or 2-methyl-and 4-methyl-branched acyl-CoAs. The chain is Phytanoyl-CoA dioxygenase, peroxisomal (Phyh) from Rattus norvegicus (Rat).